Consider the following 222-residue polypeptide: Superoxide dismutase [Mn], mitochondrial (222 aa).

The transit peptide at 1–24 directs the protein to the mitochondrion; it reads MLCRAACSTSRKLVPALGSLGSRQ. H50 is a binding site for Mn(2+). A 3'-nitrotyrosine modification is found at Y58. 2 positions are modified to N6-acetyllysine; alternate: K68 and K75. N6-succinyllysine; alternate is present on residues K68 and K75. Residue H98 coordinates Mn(2+). K114 bears the N6-acetyllysine mark. 2 positions are modified to N6-acetyllysine; alternate: K122 and K130. K122 and K130 each carry N6-succinyllysine; alternate. The Mn(2+) site is built by D183 and H187. K202 bears the N6-acetyllysine mark.

The protein belongs to the iron/manganese superoxide dismutase family. Homotetramer. It depends on Mn(2+) as a cofactor. Nitrated under oxidative stress. Nitration coupled with oxidation inhibits the catalytic activity. In terms of processing, acetylation at Lys-122 decreases enzymatic activity. Deacetylated by SIRT3 upon exposure to ionizing radiations or after long fasting. Post-translationally, polyubiquitinated; leading to proteasomal degradation. Deubiquitinated by USP36 which increases protein stability.

Its subcellular location is the mitochondrion matrix. It carries out the reaction 2 superoxide + 2 H(+) = H2O2 + O2. Its function is as follows. Destroys superoxide anion radicals which are normally produced within the cells and which are toxic to biological systems. In Equus caballus (Horse), this protein is Superoxide dismutase [Mn], mitochondrial (SOD2).